The following is a 209-amino-acid chain: Protein phosphotransferase ChpT (209 aa).

A Phosphohistidine modification is found at His-22.

It belongs to the ChpT phosphotransferase family. In terms of assembly, homodimer. Forms an asymmetric heterotetramer with CtrA (2:2). There are at least two modes of interaction between ChpT and CtrA, only one of which is competent to catalyze His-Asp phosphoryl transfer. In terms of processing, is phosphorylated by CckA-P on His-22.

The protein localises to the cytoplasm. Its function is as follows. Component of a regulatory phosphorelay system that controls B.abortus cell growth, division, and intracellular survival inside mammalian host cells. This signaling pathway is composed of CckA, ChpT, CtrA and CpdR. ChpT efficiently and specifically shuttles phosphoryl groups from the CckA kinase to the receiver domains of both CtrA and CpdR. Does not bind ATP. Overexpression of chpT results in a defect in cell morphology, DNA content, and intracellular survival in human macrophages. This Brucella abortus (strain 2308) protein is Protein phosphotransferase ChpT.